Reading from the N-terminus, the 242-residue chain is Uridylate kinase (242 aa).

An ATP-binding site is contributed by 11-14 (KLSG). The involved in allosteric activation by GTP stretch occupies residues 19-24 (GEKGVG). Residue Gly53 participates in UMP binding. Positions 54 and 58 each coordinate ATP. UMP is bound by residues Asp73 and 134–141 (IGSPYFST). The ATP site is built by Asn162, Tyr168, and Asp171.

Belongs to the UMP kinase family. As to quaternary structure, homohexamer.

Its subcellular location is the cytoplasm. The enzyme catalyses UMP + ATP = UDP + ADP. The protein operates within pyrimidine metabolism; CTP biosynthesis via de novo pathway; UDP from UMP (UMPK route): step 1/1. With respect to regulation, allosterically activated by GTP. Inhibited by UTP. In terms of biological role, catalyzes the reversible phosphorylation of UMP to UDP. The polypeptide is Uridylate kinase (Streptococcus pyogenes serotype M1).